Consider the following 26-residue polypeptide: Fumarylacetoacetate hydrolase domain-containing protein 2A (26 aa).

The protein belongs to the FAH family. The cofactor is Ca(2+). Mg(2+) is required as a cofactor.

Its function is as follows. May have hydrolase activity. The chain is Fumarylacetoacetate hydrolase domain-containing protein 2A from Mesocricetus auratus (Golden hamster).